An 848-amino-acid polypeptide reads, in one-letter code: Translation initiation factor IF-2 (848 aa).

Positions 1 to 10 (MSENNNDKIT) are enriched in basic and acidic residues. Disordered regions lie at residues 1–79 (MSEN…EKPV) and 121–163 (AERQ…LFSS). Positions 17-33 (LKRSGSETNTVKQNFNH) are enriched in polar residues. Residues 121-138 (AERQAAEKQAKESEEGLH) are compositionally biased toward basic and acidic residues. Residues 149-163 (KSSSNTTKPTPLFSS) are compositionally biased toward polar residues. A tr-type G domain is found at 346–513 (TRPPIVTIMG…AILLQAEILD (168 aa)). Positions 355-362 (GHVDHGKT) are G1. 355 to 362 (GHVDHGKT) provides a ligand contact to GTP. Positions 380–384 (GITQH) are G2. Residues 401–404 (DTPG) form a G3 region. Residues 401–405 (DTPGH) and 455–458 (NKID) each bind GTP. The tract at residues 455-458 (NKID) is G4. A G5 region spans residues 491-493 (SAK).

This sequence belongs to the TRAFAC class translation factor GTPase superfamily. Classic translation factor GTPase family. IF-2 subfamily.

The protein resides in the cytoplasm. Functionally, one of the essential components for the initiation of protein synthesis. Protects formylmethionyl-tRNA from spontaneous hydrolysis and promotes its binding to the 30S ribosomal subunits. Also involved in the hydrolysis of GTP during the formation of the 70S ribosomal complex. The protein is Translation initiation factor IF-2 of Bartonella bacilliformis (strain ATCC 35685 / KC583 / Herrer 020/F12,63).